We begin with the raw amino-acid sequence, 334 residues long: D-alanine--D-alanine ligase (334 aa).

Positions 111–315 (KRVCLSHGVP…YEDLCIEILR (205 aa)) constitute an ATP-grasp domain. 141 to 196 (AAEFGLPLMLKAPHEGSTIGIAKVETAEGMQAGFDLCAKYEAVVLVEQFVKGRELT) contacts ATP. Residues aspartate 268, glutamate 282, and asparagine 284 each coordinate Mg(2+).

Belongs to the D-alanine--D-alanine ligase family. Mg(2+) serves as cofactor. It depends on Mn(2+) as a cofactor.

It is found in the cytoplasm. It catalyses the reaction 2 D-alanine + ATP = D-alanyl-D-alanine + ADP + phosphate + H(+). Its pathway is cell wall biogenesis; peptidoglycan biosynthesis. In terms of biological role, cell wall formation. The sequence is that of D-alanine--D-alanine ligase from Herminiimonas arsenicoxydans.